Consider the following 1251-residue polypeptide: Immunoglobulin-like and fibronectin type III domain-containing protein 1 (1251 aa).

The 91-residue stretch at 29–119 folds into the Ig-like 1 domain; sequence PDFEQKPVTS…GEAACSVRLT (91 aa). The disordered stretch occupies residues 61 to 81; that stretch reads RWQNSKGDLSDSSKYKISSSP. The stretch at 188-221 forms a coiled coil; the sequence is IVDYRGMLRRLQEMKKEQEDKMAQYINTISSLRH. An Ig-like 2 domain is found at 309–398; the sequence is PRVVVPLAET…SSAWLVVEAG (90 aa). Residues 403–433 show a composition bias toward basic and acidic residues; that stretch reads LQSTSADHKLQSRRSGKDGRLDIYGERRDAT. The interval 403–454 is disordered; that stretch reads LQSTSADHKLQSRRSGKDGRLDIYGERRDATRSSTSRYKPGTGSFSKDAQGP. Residues 434–449 show a composition bias toward polar residues; that stretch reads RSSTSRYKPGTGSFSK. Residues 454 to 539 enclose the Ig-like 3 domain; that stretch reads PMGHFSQGLA…GDQQSEATLT (86 aa). Fibronectin type-III domains lie at 646–741, 746–845, and 847–942; these read PPQG…VAPE, APSA…MRPP, and LVRN…AMPV. Positions 946–1030 constitute an Ig-like 4 domain; the sequence is PKFLVDSSTK…LRTLQGKEVA (85 aa). The 95-residue stretch at 1043-1137 folds into the Fibronectin type-III 4 domain; sequence APGPIHLQEN…TSQPWCIPRQ (95 aa). An Ig-like 5 domain is found at 1151-1245; sequence PDLSQKPRFL…GQAVSTATLI (95 aa).

As to quaternary structure, interacts with FLNC. Interacts with KY. In terms of tissue distribution, expressed in skeletal muscle.

The protein resides in the nucleus. Its subcellular location is the cytoplasm. It is found in the myofibril. It localises to the sarcomere. The protein localises to the z line. This chain is Immunoglobulin-like and fibronectin type III domain-containing protein 1 (IGFN1), found in Homo sapiens (Human).